A 570-amino-acid chain; its full sequence is DNA polymerase/3'-5' exonuclease PolX (570 aa).

Residues 1-315 (MHKKDIIRLL…PLIPPEIRES (315 aa)) form a DNA polymerase type-X region. The a divalent metal cation site is built by D193, D195, and D240. A 3'-5' exonuclease region spans residues 333–570 (QIKGDLHMHS…DVEAFLKRND (238 aa)). Residues H339, H341, H371, E410, H437, H465, D526, and H528 each coordinate Mn(2+).

The protein in the N-terminal section; belongs to the DNA polymerase type-X family. This sequence in the C-terminal section; belongs to the PHP family. In terms of assembly, monomer. Requires Mn(2+) as cofactor. Mg(2+) is required as a cofactor.

It carries out the reaction DNA(n) + a 2'-deoxyribonucleoside 5'-triphosphate = DNA(n+1) + diphosphate. It catalyses the reaction Exonucleolytic cleavage in the 3'- to 5'-direction to yield nucleoside 5'-phosphates.. With respect to regulation, the polymerization activity is inhibited in the presence of 2'-3'-dideoxynucleoside 5'-triphosphate (ddNTP). In terms of biological role, strictly DNA-template-directed DNA polymerase, preferentially acting on DNA structures containing gaps from one to a few nucleotides and bearing a phosphate group at the 5' end of the downstream DNA. The fact that PolX is able to conduct filling of a single-nucleotide gap, allowing further sealing of the resulting nick by a DNA ligase, points to a putative role in base excision repair (BER) during the B.subtilis life cycle. Moreover, also possesses a 3'-5' exonuclease activity able to edit unpaired 3'-termini in a gapped DNA substrate and likely involved in resecting unannealed 3'-termini during DNA repair. The same PolX molecule could perform the subsequent gap-filling step. Does not display 5'-deoxyribose 5'-phosphate (dRP) lyase activity, as predicted by the lack of the lysine and tyrosine residues responsible for the dRP lyase activity in some other PolX members. The chain is DNA polymerase/3'-5' exonuclease PolX (polX) from Bacillus subtilis (strain 168).